The chain runs to 662 residues: UvrABC system protein B (662 aa).

The Helicase ATP-binding domain occupies 31-188 (DNIEGGEKAQ…NDLVDIQFER (158 aa)). Position 44–51 (44–51 (GATGTGKT)) interacts with ATP. Residues 97–120 (YYDYYQPEAYVPSSDTYIEKDSSV) carry the Beta-hairpin motif. Positions 435–601 (QIDDLLGEIN…TIKKEIRDLI (167 aa)) constitute a Helicase C-terminal domain. The 36-residue stretch at 626 to 661 (KELVKKLEKQMQEAVEVLDFELAAQIRDMMLEVKAL) folds into the UVR domain.

Belongs to the UvrB family. Forms a heterotetramer with UvrA during the search for lesions. Interacts with UvrC in an incision complex.

The protein localises to the cytoplasm. Its function is as follows. The UvrABC repair system catalyzes the recognition and processing of DNA lesions. A damage recognition complex composed of 2 UvrA and 2 UvrB subunits scans DNA for abnormalities. Upon binding of the UvrA(2)B(2) complex to a putative damaged site, the DNA wraps around one UvrB monomer. DNA wrap is dependent on ATP binding by UvrB and probably causes local melting of the DNA helix, facilitating insertion of UvrB beta-hairpin between the DNA strands. Then UvrB probes one DNA strand for the presence of a lesion. If a lesion is found the UvrA subunits dissociate and the UvrB-DNA preincision complex is formed. This complex is subsequently bound by UvrC and the second UvrB is released. If no lesion is found, the DNA wraps around the other UvrB subunit that will check the other stand for damage. The sequence is that of UvrABC system protein B from Streptococcus pneumoniae (strain Taiwan19F-14).